We begin with the raw amino-acid sequence, 351 residues long: Peptide chain release factor 1 (351 aa).

Position 229 is an N5-methylglutamine (glutamine 229). A disordered region spans residues 279 to 300 (ADAERAADRKSQVGSGDRSERI).

It belongs to the prokaryotic/mitochondrial release factor family. Post-translationally, methylated by PrmC. Methylation increases the termination efficiency of RF1.

Its subcellular location is the cytoplasm. Peptide chain release factor 1 directs the termination of translation in response to the peptide chain termination codons UAG and UAA. In Paracoccus denitrificans (strain Pd 1222), this protein is Peptide chain release factor 1.